A 254-amino-acid polypeptide reads, in one-letter code: 5'-nucleotidase SurE (254 aa).

Positions 8, 9, 39, and 97 each coordinate a divalent metal cation.

Belongs to the SurE nucleotidase family. It depends on a divalent metal cation as a cofactor.

The protein resides in the cytoplasm. It carries out the reaction a ribonucleoside 5'-phosphate + H2O = a ribonucleoside + phosphate. Nucleotidase that shows phosphatase activity on nucleoside 5'-monophosphates. This Alkaliphilus metalliredigens (strain QYMF) protein is 5'-nucleotidase SurE.